The sequence spans 370 residues: Glutamine synthetase (370 aa).

The residue at position 2 (Ala-2) is an N-acetylalanine. Position 5 is a phosphoserine (Ser-5). In terms of domain architecture, GS beta-grasp spans 24 to 103; the sequence is IIAEYVWIDG…VLAACYNNDG (80 aa). One can recognise a GS catalytic domain in the interval 110-370; sequence HRHEAAKLFA…MTKEFERESS (261 aa). Residues Lys-283, Lys-324, and Lys-363 each participate in a glycyl lysine isopeptide (Lys-Gly) (interchain with G-Cter in ubiquitin) cross-link.

The protein belongs to the glutamine synthetase family. In terms of assembly, homooctamer.

The protein resides in the cytoplasm. The catalysed reaction is L-glutamate + NH4(+) + ATP = L-glutamine + ADP + phosphate + H(+). The protein is Glutamine synthetase (GLN1) of Saccharomyces cerevisiae (strain ATCC 204508 / S288c) (Baker's yeast).